We begin with the raw amino-acid sequence, 137 residues long: ATP synthase epsilon chain (137 aa).

Belongs to the ATPase epsilon chain family. F-type ATPases have 2 components, CF(1) - the catalytic core - and CF(0) - the membrane proton channel. CF(1) has five subunits: alpha(3), beta(3), gamma(1), delta(1), epsilon(1). CF(0) has three main subunits: a, b and c.

Its subcellular location is the cell inner membrane. Its function is as follows. Produces ATP from ADP in the presence of a proton gradient across the membrane. The sequence is that of ATP synthase epsilon chain from Ruegeria sp. (strain TM1040) (Silicibacter sp.).